Consider the following 119-residue polypeptide: Fluoride-specific ion channel FluC 2 (119 aa).

Residues 46-66 traverse the membrane as a helical segment; sequence FALGLLTFAGVTGDAALLVGV. Na(+) is bound by residues Gly70 and Thr73. The helical transmembrane segment at 96-116 threads the bilayer; it reads LNAVGNLACALVGIGLAWGIV.

Belongs to the fluoride channel Fluc/FEX (TC 1.A.43) family.

The protein resides in the cell membrane. The catalysed reaction is fluoride(in) = fluoride(out). Na(+) is not transported, but it plays an essential structural role and its presence is essential for fluoride channel function. Fluoride-specific ion channel. Important for reducing fluoride concentration in the cell, thus reducing its toxicity. This is Fluoride-specific ion channel FluC 2 from Haloarcula marismortui (strain ATCC 43049 / DSM 3752 / JCM 8966 / VKM B-1809) (Halobacterium marismortui).